A 379-amino-acid polypeptide reads, in one-letter code: UDP-4-amino-4-deoxy-L-arabinose--oxoglutarate aminotransferase (379 aa).

An N6-(pyridoxal phosphate)lysine modification is found at lysine 182.

It belongs to the DegT/DnrJ/EryC1 family. ArnB subfamily. As to quaternary structure, homodimer. Requires pyridoxal 5'-phosphate as cofactor.

It catalyses the reaction UDP-4-amino-4-deoxy-beta-L-arabinose + 2-oxoglutarate = UDP-beta-L-threo-pentopyranos-4-ulose + L-glutamate. Its pathway is nucleotide-sugar biosynthesis; UDP-4-deoxy-4-formamido-beta-L-arabinose biosynthesis; UDP-4-deoxy-4-formamido-beta-L-arabinose from UDP-alpha-D-glucuronate: step 2/3. It participates in bacterial outer membrane biogenesis; lipopolysaccharide biosynthesis. Functionally, catalyzes the conversion of UDP-4-keto-arabinose (UDP-Ara4O) to UDP-4-amino-4-deoxy-L-arabinose (UDP-L-Ara4N). The modified arabinose is attached to lipid A and is required for resistance to polymyxin and cationic antimicrobial peptides. This Escherichia coli O7:K1 (strain IAI39 / ExPEC) protein is UDP-4-amino-4-deoxy-L-arabinose--oxoglutarate aminotransferase.